The primary structure comprises 105 residues: Large ribosomal subunit protein uL24 (105 aa).

Belongs to the universal ribosomal protein uL24 family. As to quaternary structure, part of the 50S ribosomal subunit.

In terms of biological role, one of two assembly initiator proteins, it binds directly to the 5'-end of the 23S rRNA, where it nucleates assembly of the 50S subunit. Functionally, one of the proteins that surrounds the polypeptide exit tunnel on the outside of the subunit. This chain is Large ribosomal subunit protein uL24, found in Rhodospirillum centenum (strain ATCC 51521 / SW).